Here is a 279-residue protein sequence, read N- to C-terminus: Arabinooligosaccharides transport system permease protein AraQ (279 aa).

6 helical membrane-spanning segments follow: residues 8 to 28, 79 to 99, 110 to 130, 140 to 160, 184 to 204, and 245 to 265; these read ILSWLLTIGFAFIAFIAVFPL, VWISIVIVVLSLLFSSMVGYA, FFFLLVLIILMIPFEILMLPL, VNTYTAVILPAIVAPIAVFFF, GIFFKIMLPLMGPSLAAMAIL, and ILLAGSVMTIVPIVILFIFFQ. One can recognise an ABC transmembrane type-1 domain in the interval 75–264; that stretch reads FGNSVWISIV…VPIVILFIFF (190 aa).

Belongs to the binding-protein-dependent transport system permease family. MalFG subfamily. As to quaternary structure, the complex is composed of two ATP-binding proteins (MsmX), two transmembrane proteins (AraP and AraQ) and a solute-binding protein (AraN).

The protein resides in the cell membrane. In terms of biological role, part of the ABC transporter complex AraNPQ involved in the uptake of arabinooligosaccharides. Responsible for the translocation of the substrate across the membrane. The sequence is that of Arabinooligosaccharides transport system permease protein AraQ (araQ) from Halalkalibacterium halodurans (strain ATCC BAA-125 / DSM 18197 / FERM 7344 / JCM 9153 / C-125) (Bacillus halodurans).